The following is a 609-amino-acid chain: Copper resistance protein A (609 aa).

The segment at residues M1–A32 is a signal peptide (tat-type signal). Residues H100, H102, H142, and H144 each contribute to the Cu cation site. 5 consecutive repeat copies span residues D367 to M374, D375 to M382, D408 to M415, D419 to M426, and D427 to M434. The 5 X 8 AA tandem repeats of D-H-X-X-M-X-G-M stretch occupies residues D367–M434. Cu cation contacts are provided by H542, H545, H547, H590, C591, H592, H596, and M601.

It belongs to the multicopper oxidase family. CopA subfamily. In terms of processing, predicted to be exported by the Tat system. The position of the signal peptide cleavage has been experimentally proven.

It is found in the periplasm. Mediates copper resistance by sequestration of copper in the periplasm along with the copper-binding protein CopC. May have oxidase activity. The sequence is that of Copper resistance protein A (copA) from Pseudomonas syringae pv. tomato.